Consider the following 543-residue polypeptide: Ipecac alkaloid beta-glucosidase 2 (543 aa).

A beta-D-glucoside-binding positions include glutamine 36, histidine 140, asparagine 185–glutamate 186, tyrosine 350, glutamate 422, tryptophan 471, and phenylalanine 487. The Proton donor role is filled by glutamate 186. Glutamate 422 serves as the catalytic Nucleophile.

The protein belongs to the glycosyl hydrolase 1 family.

It is found in the cytoplasm. The protein resides in the cytosol. The catalysed reaction is deacetylipecoside + H2O = deacetylipecoside aglycone + D-glucose. It catalyses the reaction deacetylisoipecoside + H2O = deacetylisoipecoside aglycone + D-glucose. It participates in alkaloid biosynthesis. Its function is as follows. Beta-glucosidase catalyzing deglucosylation on N-deacetylisoipecoside and N-deacetylipecoside. The chain is Ipecac alkaloid beta-glucosidase 2 from Carapichea ipecacuanha (Ipecac).